The sequence spans 147 residues: Thyrotropin subunit beta (147 aa).

A signal peptide spans 1–20 (MRVVLLASAVLCLLAGQVLS). Intrachain disulfides connect C22–C72, C36–C87, C39–C126, C47–C103, C51–C105, and C108–C115. N-linked (GlcNAc...) asparagine glycosylation occurs at N43.

The protein belongs to the glycoprotein hormones subunit beta family. As to quaternary structure, heterodimer of a common alpha chain and a unique beta chain which confers biological specificity to thyrotropin, lutropin, follitropin and gonadotropin.

Its subcellular location is the secreted. Functionally, indispensable for the control of thyroid structure and metabolism. May play some role in the biological processes of the immature fishes. In Anguilla anguilla (European freshwater eel), this protein is Thyrotropin subunit beta (tshb).